The following is a 261-amino-acid chain: Complex I assembly factor TIMMDC1, mitochondrial (261 aa).

The next 3 helical transmembrane spans lie at 67 to 87 (LNSV…YGGV), 131 to 151 (WGWR…CMSV), and 183 to 203 (AGGI…LLLM).

Belongs to the Tim17/Tim22/Tim23 family. In terms of assembly, associates with complex I assembly intermediates during its biogenesis in a NdufAF3 and NdufAF4 dependent manner.

Its subcellular location is the membrane. In terms of biological role, chaperone protein involved in the assembly of the mitochondrial NADH:ubiquinone oxidoreductase complex (complex I). Essential for viability. This Drosophila melanogaster (Fruit fly) protein is Complex I assembly factor TIMMDC1, mitochondrial.